The following is a 478-amino-acid chain: MAEEGLLLPASSTSSSSSLLSEISNACTRPFVLAFIVGSCGAFAFGCIIGYSAPTQTSIMKDLNLSIADYSLFGSILTVGLILGALICGKLTDLVGRVKTIWITNILFVIGWFAIAFAKGVWLLDLGRLLQGISIGISVYLGPVYITEIAPRNLRGAASSFAQLFAGVGISVFYALGTIVAWRNLAILGCIPSLMVLPLLFFIPESPRWLAKVGREMEVEAVLLSLRGEKSDVSDEAAEILEYTEHVKQQQDIDDRGFFKLFQRKYAFSLTIGVVLIALPQLGGLNGYSFYTDSIFISTGVSSDFGFISTSVVQMFGGILGTVLVDVSGRRTLLLVSQAGMFLGCLTTAISFFLKENHCWETGTPVLALFSVMVYFGSYGSGMGSIPWIIASEIYPVDVKGAAGTMCNLVSSISAWLVAYSFSYLLQWSSTGTFLMFATVAGLGFVFIAKLVPETKGKSLEEIQSLFTDSPPQDSTIF.

Transmembrane regions (helical) follow at residues 31–51 (FVLA…IIGY), 67–87 (IADY…GALI), 106–126 (ILFV…LLDL), 129–149 (LLQG…ITEI), 161–181 (FAQL…TIVA), 185–205 (LAIL…FIPE), 267–287 (AFSL…GLNG), 305–325 (FGFI…TVLV), 333–353 (LLLV…ISFF), 366–386 (VLAL…MGSI), 406–426 (MCNL…SYLL), and 432–452 (GTFL…AKLV).

It belongs to the major facilitator superfamily. Sugar transporter (TC 2.A.1.1) family.

It is found in the membrane. Sugar transporter. The sequence is that of Sugar transporter ERD6-like 15 from Arabidopsis thaliana (Mouse-ear cress).